A 253-amino-acid polypeptide reads, in one-letter code: Probable U2 small nuclear ribonucleoprotein A' (253 aa).

LRR repeat units follow at residues 20–41 (NMRE…GVTR), 43–64 (QFDV…PTFS), 65–86 (RLNT…IATK), and 89–110 (NLKT…EPLA). The 39-residue stretch at 123–161 (NPITHKDNYRMYMIYKLPTVRVIDFNRVRLTEREAAKKM) folds into the LRRCT domain. Disordered regions lie at residues 163–205 (KGKS…EDRE) and 232–253 (VPEK…AMES). Residues 169-182 (KARDAIQKSVHTED) are compositionally biased toward basic and acidic residues.

This sequence belongs to the U2 small nuclear ribonucleoprotein A family. In terms of assembly, interacts with rnp-3.

Its subcellular location is the nucleus. In terms of biological role, this protein is associated with sn-RNP U2. It helps the A' protein to bind stem loop IV of U2 snRNA. Required maternally for early embryonic development and zygotically for germline and somatic development. Has a role in the switch from mitosis to meiosis. Might function in alternative splicing. The chain is Probable U2 small nuclear ribonucleoprotein A' (mog-2) from Caenorhabditis elegans.